Consider the following 66-residue polypeptide: Large ribosomal subunit protein bL35 (66 aa).

Residues 1 to 16 (MPKQKTHRASAKRFKR) show a composition bias toward basic residues. The interval 1–20 (MPKQKTHRASAKRFKRTGSG) is disordered.

Belongs to the bacterial ribosomal protein bL35 family.

In Streptococcus thermophilus (strain CNRZ 1066), this protein is Large ribosomal subunit protein bL35.